The chain runs to 243 residues: ATP synthase subunit a (243 aa).

Transmembrane regions (helical) follow at residues 29–49 (NASLFMVLSTISVALFCYIGL), 54–74 (IIPNGIQSIVEFIYEFIVSTI), 89–109 (VFTIFMFIATCNLLGILPLGF), 114–134 (HIAVTFAISMVVFVSVTIIGF), 144–164 (ILLPQGTPGWLAPMMVFIELF), 182–202 (IAGHTIIKVIAGFVVKMNIFL), and 208–228 (IFIIILIGFEIFVAILQAYIF).

This sequence belongs to the ATPase A chain family. As to quaternary structure, F-type ATPases have 2 components, CF(1) - the catalytic core - and CF(0) - the membrane proton channel. CF(1) has five subunits: alpha(3), beta(3), gamma(1), delta(1), epsilon(1). CF(0) has three main subunits: a(1), b(2) and c(9-12). The alpha and beta chains form an alternating ring which encloses part of the gamma chain. CF(1) is attached to CF(0) by a central stalk formed by the gamma and epsilon chains, while a peripheral stalk is formed by the delta and b chains.

It localises to the cell inner membrane. Functionally, key component of the proton channel; it plays a direct role in the translocation of protons across the membrane. This Ehrlichia canis (strain Jake) protein is ATP synthase subunit a.